The chain runs to 326 residues: tRNA-modifying protein YgfZ (326 aa).

Tryptophan 27 and tryptophan 189 together coordinate folate.

The protein belongs to the tRNA-modifying YgfZ family.

Its subcellular location is the cytoplasm. Its function is as follows. Folate-binding protein involved in regulating the level of ATP-DnaA and in the modification of some tRNAs. It is probably a key factor in regulatory networks that act via tRNA modification, such as initiation of chromosomal replication. This chain is tRNA-modifying protein YgfZ, found in Escherichia coli O139:H28 (strain E24377A / ETEC).